Here is a 1317-residue protein sequence, read N- to C-terminus: DNA-directed RNA polymerase subunit beta' (1317 aa).

Positions 60, 62, 75, and 78 each coordinate Zn(2+). Asp535, Asp537, and Asp539 together coordinate Mg(2+). The Zn(2+) site is built by Cys890, Cys967, Cys974, and Cys977.

The protein belongs to the RNA polymerase beta' chain family. The RNAP catalytic core consists of 2 alpha, 1 beta, 1 beta' and 1 omega subunit. When a sigma factor is associated with the core the holoenzyme is formed, which can initiate transcription. Mg(2+) is required as a cofactor. The cofactor is Zn(2+).

The catalysed reaction is RNA(n) + a ribonucleoside 5'-triphosphate = RNA(n+1) + diphosphate. DNA-dependent RNA polymerase catalyzes the transcription of DNA into RNA using the four ribonucleoside triphosphates as substrates. The sequence is that of DNA-directed RNA polymerase subunit beta' from Nocardia farcinica (strain IFM 10152).